A 194-amino-acid polypeptide reads, in one-letter code: Translation machinery-associated protein 22 (194 aa).

The 72-residue stretch at 102–173 (VQIKRVERNK…DVQEWLLELY (72 aa)) folds into the SUI1 domain.

The protein belongs to the DENR family. In terms of assembly, interacts with the 40S ribosomal subunit.

Its subcellular location is the cytoplasm. This Neosartorya fischeri (strain ATCC 1020 / DSM 3700 / CBS 544.65 / FGSC A1164 / JCM 1740 / NRRL 181 / WB 181) (Aspergillus fischerianus) protein is Translation machinery-associated protein 22 (tma22).